The chain runs to 277 residues: Release factor glutamine methyltransferase (277 aa).

S-adenosyl-L-methionine-binding positions include 117-121, D140, W168, and N182; that span reads GTGCG. 182–185 lines the substrate pocket; sequence NPPY.

It belongs to the protein N5-glutamine methyltransferase family. PrmC subfamily.

The enzyme catalyses L-glutaminyl-[peptide chain release factor] + S-adenosyl-L-methionine = N(5)-methyl-L-glutaminyl-[peptide chain release factor] + S-adenosyl-L-homocysteine + H(+). In terms of biological role, methylates the class 1 translation termination release factors RF1/PrfA and RF2/PrfB on the glutamine residue of the universally conserved GGQ motif. This Buchnera aphidicola subsp. Acyrthosiphon pisum (strain APS) (Acyrthosiphon pisum symbiotic bacterium) protein is Release factor glutamine methyltransferase.